The primary structure comprises 389 residues: Dihydroorotase (389 aa).

Positions 51 and 53 each coordinate Zn(2+). Substrate-binding positions include 53 to 55 (HVR) and asparagine 85. Residues lysine 133, histidine 158, histidine 192, and aspartate 254 each coordinate Zn(2+). Lysine 133 is subject to N6-carboxylysine. Aspartate 254 is an active-site residue. Substrate-binding positions include histidine 258 and 272–273 (PG).

This sequence belongs to the metallo-dependent hydrolases superfamily. DHOase family. Class I DHOase subfamily. Zn(2+) is required as a cofactor.

The enzyme catalyses (S)-dihydroorotate + H2O = N-carbamoyl-L-aspartate + H(+). It functions in the pathway pyrimidine metabolism; UMP biosynthesis via de novo pathway; (S)-dihydroorotate from bicarbonate: step 3/3. In terms of biological role, catalyzes the reversible cyclization of carbamoyl aspartate to dihydroorotate. This Sulfurisphaera tokodaii (strain DSM 16993 / JCM 10545 / NBRC 100140 / 7) (Sulfolobus tokodaii) protein is Dihydroorotase.